A 412-amino-acid polypeptide reads, in one-letter code: DnaJ homolog subfamily A member 2 (412 aa).

The J domain maps to 8 to 70 (KLYDILGVPP…EKRELYDRYG (63 aa)). Lysine 39 is modified (N6-acetyllysine). Phosphoserine is present on residues serine 78 and serine 123. A CR-type zinc finger spans residues 130–214 (GKTTKLQLSK…CEGKKVIKEV (85 aa)). Lysine 134 is covalently cross-linked (Glycyl lysine isopeptide (Lys-Gly) (interchain with G-Cter in SUMO2)). Residues cysteine 143 and cysteine 146 each contribute to the Zn(2+) site. One copy of the CXXCXGXG motif repeat lies at 143–150 (CSACSGQG). Residue lysine 152 is modified to N6-acetyllysine. The Zn(2+) site is built by cysteine 159, cysteine 162, cysteine 186, cysteine 189, cysteine 202, and cysteine 205. CXXCXGXG motif repeat units follow at residues 159 to 166 (CSACRGRG), 186 to 193 (CSDCNGEG), and 202 to 209 (CKKCEGKK). Residues 365-412 (IGETEEVELQEFDSTRGSGGGQRREAYNDSSDEESSSHHGPGVQCAHQ) are disordered. Tyrosine 391 carries the phosphotyrosine modification. Phosphoserine occurs at positions 394 and 395. At cysteine 409 the chain carries Cysteine methyl ester. Residue cysteine 409 is the site of S-farnesyl cysteine attachment. Residues 410–412 (AHQ) constitute a propeptide, removed in mature form.

It localises to the membrane. Functionally, co-chaperone of Hsc70. Stimulates ATP hydrolysis and the folding of unfolded proteins mediated by HSPA1A/B (in vitro). The chain is DnaJ homolog subfamily A member 2 (Dnaja2) from Rattus norvegicus (Rat).